A 1409-amino-acid polypeptide reads, in one-letter code: DNA-directed RNA polymerase subunit beta' (1409 aa).

Zn(2+) is bound by residues Cys70, Cys72, Cys85, and Cys88. Mg(2+) contacts are provided by Asp461, Asp463, and Asp465. The Zn(2+) site is built by Cys833, Cys907, Cys914, and Cys917. The interval 1389-1409 (EPVAQAAESEDVPDVSQQEAA) is disordered.

Belongs to the RNA polymerase beta' chain family. The RNAP catalytic core consists of 2 alpha, 1 beta, 1 beta' and 1 omega subunit. When a sigma factor is associated with the core the holoenzyme is formed, which can initiate transcription. The cofactor is Mg(2+). Zn(2+) is required as a cofactor.

The enzyme catalyses RNA(n) + a ribonucleoside 5'-triphosphate = RNA(n+1) + diphosphate. In terms of biological role, DNA-dependent RNA polymerase catalyzes the transcription of DNA into RNA using the four ribonucleoside triphosphates as substrates. This chain is DNA-directed RNA polymerase subunit beta', found in Pelobacter propionicus (strain DSM 2379 / NBRC 103807 / OttBd1).